The chain runs to 122 residues: Large ribosomal subunit protein uL14 (122 aa).

The protein belongs to the universal ribosomal protein uL14 family. Part of the 50S ribosomal subunit. Forms a cluster with proteins L3 and L19. In the 70S ribosome, L14 and L19 interact and together make contacts with the 16S rRNA in bridges B5 and B8.

Binds to 23S rRNA. Forms part of two intersubunit bridges in the 70S ribosome. The chain is Large ribosomal subunit protein uL14 from Chloroherpeton thalassium (strain ATCC 35110 / GB-78).